The primary structure comprises 91 residues: Small ribosomal subunit protein bS18 (91 aa).

The protein belongs to the bacterial ribosomal protein bS18 family. In terms of assembly, part of the 30S ribosomal subunit. Forms a tight heterodimer with protein bS6.

Its function is as follows. Binds as a heterodimer with protein bS6 to the central domain of the 16S rRNA, where it helps stabilize the platform of the 30S subunit. The polypeptide is Small ribosomal subunit protein bS18 (Paraburkholderia phymatum (strain DSM 17167 / CIP 108236 / LMG 21445 / STM815) (Burkholderia phymatum)).